The primary structure comprises 275 residues: Formamidopyrimidine-DNA glycosylase (275 aa).

The active-site Schiff-base intermediate with DNA is the P2. E3 serves as the catalytic Proton donor. Residue K58 is the Proton donor; for beta-elimination activity of the active site. 3 residues coordinate DNA: H93, R111, and R156. The segment at 241-275 (FVYDRAGEPCRVCGTPIRQIVQGQRSTYFCPTCQR) adopts an FPG-type zinc-finger fold. Catalysis depends on R265, which acts as the Proton donor; for delta-elimination activity.

This sequence belongs to the FPG family. Monomer. Requires Zn(2+) as cofactor.

It catalyses the reaction Hydrolysis of DNA containing ring-opened 7-methylguanine residues, releasing 2,6-diamino-4-hydroxy-5-(N-methyl)formamidopyrimidine.. It carries out the reaction 2'-deoxyribonucleotide-(2'-deoxyribose 5'-phosphate)-2'-deoxyribonucleotide-DNA = a 3'-end 2'-deoxyribonucleotide-(2,3-dehydro-2,3-deoxyribose 5'-phosphate)-DNA + a 5'-end 5'-phospho-2'-deoxyribonucleoside-DNA + H(+). Involved in base excision repair of DNA damaged by oxidation or by mutagenic agents. Acts as a DNA glycosylase that recognizes and removes damaged bases. Has a preference for oxidized purines, such as 7,8-dihydro-8-oxoguanine (8-oxoG). Has AP (apurinic/apyrimidinic) lyase activity and introduces nicks in the DNA strand. Cleaves the DNA backbone by beta-delta elimination to generate a single-strand break at the site of the removed base with both 3'- and 5'-phosphates. This chain is Formamidopyrimidine-DNA glycosylase, found in Burkholderia multivorans (strain ATCC 17616 / 249).